Reading from the N-terminus, the 283-residue chain is uncharacterized protein (283 aa).

Residues 4–131 form the FAD-binding FR-type domain; sequence RPLHAFEVVA…MGPGGAYAPD (128 aa).

This is an uncharacterized protein from Mycobacterium bovis (strain ATCC BAA-935 / AF2122/97).